Reading from the N-terminus, the 532-residue chain is Phosphoenolpyruvate carboxykinase (ATP) (532 aa).

Residues Arg-60, Tyr-194, and Lys-200 each coordinate substrate. ATP-binding positions include Lys-200, His-219, and 237 to 245; that span reads GLSGTGKTT. Mn(2+)-binding residues include Lys-200 and His-219. Position 258 (Asp-258) interacts with Mn(2+). Positions 286, 324, and 449 each coordinate ATP. A substrate-binding site is contributed by Arg-324.

This sequence belongs to the phosphoenolpyruvate carboxykinase (ATP) family. Requires Mn(2+) as cofactor.

It localises to the cytoplasm. The enzyme catalyses oxaloacetate + ATP = phosphoenolpyruvate + ADP + CO2. It participates in carbohydrate biosynthesis; gluconeogenesis. Its function is as follows. Involved in the gluconeogenesis. Catalyzes the conversion of oxaloacetate (OAA) to phosphoenolpyruvate (PEP) through direct phosphoryl transfer between the nucleoside triphosphate and OAA. The polypeptide is Phosphoenolpyruvate carboxykinase (ATP) (Cereibacter sphaeroides (strain ATCC 17025 / ATH 2.4.3) (Rhodobacter sphaeroides)).